Consider the following 299-residue polypeptide: Large ribosomal subunit protein uL18 (299 aa).

Belongs to the universal ribosomal protein uL18 family. In terms of assembly, component of the large ribosomal subunit (LSU). Interacts with Fmr1 to form the RNA-induced silencing complex (RISC), a ribonucleoprotein (RNP) complex involved in translation regulation, other components of the complex are Rm62, RpL11, AGO2 and Dcr-1.

It is found in the cytoplasm. Its subcellular location is the nucleus. Component of the ribosome, a large ribonucleoprotein complex responsible for the synthesis of proteins in the cell. The small ribosomal subunit (SSU) binds messenger RNAs (mRNAs) and translates the encoded message by selecting cognate aminoacyl-transfer RNA (tRNA) molecules. The large subunit (LSU) contains the ribosomal catalytic site termed the peptidyl transferase center (PTC), which catalyzes the formation of peptide bonds, thereby polymerizing the amino acids delivered by tRNAs into a polypeptide chain. The nascent polypeptides leave the ribosome through a tunnel in the LSU and interact with protein factors that function in enzymatic processing, targeting, and the membrane insertion of nascent chains at the exit of the ribosomal tunnel. In Drosophila melanogaster (Fruit fly), this protein is Large ribosomal subunit protein uL18 (RpL5).